Reading from the N-terminus, the 265-residue chain is Thiamine thiazole synthase (265 aa).

NAD(+)-binding positions include alanine 43, 62–63, glycine 70, valine 134, and 162–164; these read ER and HVD. Fe cation-binding residues include aspartate 164 and histidine 179. An NAD(+)-binding site is contributed by methionine 229. Arginine 239 is a binding site for glycine.

Belongs to the THI4 family. As to quaternary structure, homooctamer; tetramer of dimers. Requires Fe(2+) as cofactor.

It carries out the reaction hydrogen sulfide + glycine + NAD(+) = ADP-5-ethyl-4-methylthiazole-2-carboxylate + nicotinamide + 3 H2O + H(+). It functions in the pathway cofactor biosynthesis; thiamine diphosphate biosynthesis. Involved in the biosynthesis of the thiazole moiety of thiamine. Catalyzes the conversion of NAD and glycine to adenosine diphosphate 5-(2-hydroxyethyl)-4-methylthiazole-2-carboxylate (ADT), an adenylated thiazole intermediate, using free sulfide as a source of sulfur. In Sulfolobus acidocaldarius (strain ATCC 33909 / DSM 639 / JCM 8929 / NBRC 15157 / NCIMB 11770), this protein is Thiamine thiazole synthase.